Consider the following 175-residue polypeptide: Lipopolysaccharide export system protein LptH (175 aa).

Positions 1 to 24 (MRFVNTLPLIFGLTAALGSSMALA) are cleaved as a signal peptide.

This sequence belongs to the LptA family. Component of the lipopolysaccharide transport and assembly complex. Mainly exists as a dimer in solution. Tends to oligomerize already in solution. The protomers follow one another in a head-to-tail fashion throughout the crystal lattice, yielding a continuous fiber arrangement.

The protein localises to the periplasm. Its function is as follows. Involved in the assembly of lipopolysaccharide (LPS). Required for the translocation of LPS from the inner membrane to the outer membrane. May form a bridge between the inner membrane and the outer membrane, via interactions with LptC and LptD, thereby facilitating LPS transfer across the periplasm. Binds LPS. Important for cell envelope stability and essential for growth, cell viability and ability to cause infection in different animal models. This chain is Lipopolysaccharide export system protein LptH, found in Pseudomonas aeruginosa (strain ATCC 15692 / DSM 22644 / CIP 104116 / JCM 14847 / LMG 12228 / 1C / PRS 101 / PAO1).